The following is a 177-amino-acid chain: Protein LIGHT-DEPENDENT SHORT HYPOCOTYLS 10 (177 aa).

The span at Met-1 to Ser-10 shows a compositional bias: basic and acidic residues. 2 disordered regions span residues Met-1 to Arg-31 and Arg-144 to Ser-177. One can recognise an ALOG domain in the interval Arg-25 to Lys-152. The short motif at Lys-150–Lys-154 is the Nuclear localization signal element. Residues Ser-168 to Ser-177 show a composition bias toward low complexity.

This sequence belongs to the plant homeotic and developmental regulators ALOG protein family.

It is found in the nucleus. In terms of biological role, probable transcription regulator that acts as a developmental regulator by promoting cell growth in response to light. The sequence is that of Protein LIGHT-DEPENDENT SHORT HYPOCOTYLS 10 (LSH10) from Arabidopsis thaliana (Mouse-ear cress).